Reading from the N-terminus, the 137-residue chain is Protein phosphatase 1 regulatory subunit 1B (137 aa).

The interval 1–137 (DPKDRKKIQF…EEEEEEEDSQ (137 aa)) is disordered. Thr-33 is modified (phosphothreonine; by PKA). Over residues 40-62 (LXEHSSPEEEASPHQRAAGEGHH) the composition is skewed to basic and acidic residues. A phosphoserine mark is found at Ser-44 and Ser-45. A Phosphothreonine; by CDK5 modification is found at Thr-74. Polar residues predominate over residues 88-99 (HLQSISNLGENQ). A Phosphoserine modification is found at Ser-101. The span at 108-117 (GELRELGYPR) shows a compositional bias: basic and acidic residues. Positions 118–137 (EEEEEEEEDDEEEEEEEDSQ) are enriched in acidic residues. Ser-136 is modified (phosphoserine).

It belongs to the protein phosphatase inhibitor 1 family. Post-translationally, phosphorylation of Thr-33 is required for activity. In terms of processing, dopamine- and cyclic AMP-regulated neuronal phosphoprotein.

The protein localises to the cytoplasm. Its function is as follows. Inhibitor of protein-phosphatase 1. In Sus scrofa (Pig), this protein is Protein phosphatase 1 regulatory subunit 1B (PPP1R1B).